A 316-amino-acid polypeptide reads, in one-letter code: tRNA dimethylallyltransferase (316 aa).

17–24 (GPTASGKT) is an ATP binding site. 19–24 (TASGKT) contacts substrate. 4 interaction with substrate tRNA regions span residues 42–45 (DSAL), 166–170 (QRLSR), 247–252 (RCVGYR), and 280–287 (KRQITWLR).

It belongs to the IPP transferase family. In terms of assembly, monomer. Requires Mg(2+) as cofactor.

It carries out the reaction adenosine(37) in tRNA + dimethylallyl diphosphate = N(6)-dimethylallyladenosine(37) in tRNA + diphosphate. Functionally, catalyzes the transfer of a dimethylallyl group onto the adenine at position 37 in tRNAs that read codons beginning with uridine, leading to the formation of N6-(dimethylallyl)adenosine (i(6)A). This is tRNA dimethylallyltransferase from Shigella boydii serotype 18 (strain CDC 3083-94 / BS512).